A 320-amino-acid polypeptide reads, in one-letter code: Zinc finger Ran-binding domain-containing protein 2 (320 aa).

A Phosphoserine modification is found at Ser-9. A RanBP2-type 1 zinc finger spans residues 9–40 (SDGDWICPDKKCGNVNFARRTSCNRCGREKTT). An N6-acetyllysine mark is found at Lys-18, Lys-54, and Lys-92. The RanBP2-type 2 zinc finger occupies 65–94 (SANDWQCKTCSNVNWARRSECNMCNTPKYA). Residues 117-320 (REESDGEYDE…QVIGENTKQP (204 aa)) form a disordered region. A phosphoserine mark is found at Ser-120, Ser-153, Ser-181, Ser-188, and Ser-193. Residues 150–163 (DKESEGEEEDEDED) are compositionally biased toward acidic residues. The interval 151–320 (KESEGEEEDE…QVIGENTKQP (170 aa)) is required for nuclear targeting. The segment covering 196-210 (KKSNRRSRSKSRSSH) has biased composition (basic residues). 2 stretches are compositionally biased toward low complexity: residues 211–224 (SRSS…SSSR) and 232–242 (RSSSSSQSRSR). The span at 251 to 273 (SRGSKSRSSSRSHRGSSSPRKRS) shows a compositional bias: basic residues.

The protein belongs to the ZRANB2 family. As to quaternary structure, interacts with the C-terminal half of SNRP70/U1-70K, the Arg/Ser-rich domain of AKAP17A as well as with U2AF1 and CLK1. Phosphorylated on Ser-310 upon DNA damage, probably by ATM or ATR.

The protein localises to the nucleus. Its function is as follows. Splice factor required for alternative splicing of TRA2B/SFRS10 transcripts. Binds to ssRNA containing the consensus sequence 5'-AGGUAA-3'. May interfere with constitutive 5'-splice site selection. This Pongo abelii (Sumatran orangutan) protein is Zinc finger Ran-binding domain-containing protein 2.